Reading from the N-terminus, the 580-residue chain is RuBisCO large subunit-binding protein subunit alpha, chloroplastic (580 aa).

Residues 1 to 17 show a composition bias toward polar residues; the sequence is MAQSQLAKGSRQTTGRP. Positions 1–24 are disordered; sequence MAQSQLAKGSRQTTGRPFQNKPAR.

Belongs to the chaperonin (HSP60) family. In terms of assembly, oligomer of probably six alpha and six beta subunits.

It localises to the plastid. The protein localises to the chloroplast. In terms of biological role, this protein binds RuBisCO small and large subunits and is implicated in the assembly of the enzyme oligomer. The polypeptide is RuBisCO large subunit-binding protein subunit alpha, chloroplastic (Chlamydomonas reinhardtii (Chlamydomonas smithii)).